A 272-amino-acid polypeptide reads, in one-letter code: Tryptophan synthase alpha chain (272 aa).

Active-site proton acceptor residues include E49 and D60.

This sequence belongs to the TrpA family. Tetramer of two alpha and two beta chains.

It carries out the reaction (1S,2R)-1-C-(indol-3-yl)glycerol 3-phosphate + L-serine = D-glyceraldehyde 3-phosphate + L-tryptophan + H2O. The protein operates within amino-acid biosynthesis; L-tryptophan biosynthesis; L-tryptophan from chorismate: step 5/5. Functionally, the alpha subunit is responsible for the aldol cleavage of indoleglycerol phosphate to indole and glyceraldehyde 3-phosphate. The sequence is that of Tryptophan synthase alpha chain from Methylibium petroleiphilum (strain ATCC BAA-1232 / LMG 22953 / PM1).